The primary structure comprises 290 residues: 2-dehydro-3-deoxy-phosphogluconate/2-dehydro-3-deoxy-6-phosphogalactonate aldolase (290 aa).

Substrate is bound by residues 42–43 (TT), 129–131 (YNY), and 155–157 (KDT). Catalysis depends on Lys-155, which acts as the Schiff-base intermediate with substrate.

The protein belongs to the DapA family. KDPG aldolase subfamily. In terms of assembly, homotetramer; dimer of dimers.

It carries out the reaction 2-dehydro-3-deoxy-6-phospho-D-gluconate = D-glyceraldehyde 3-phosphate + pyruvate. It catalyses the reaction 2-dehydro-3-deoxy-6-phospho-D-galactonate = D-glyceraldehyde 3-phosphate + pyruvate. Its pathway is carbohydrate acid metabolism; 2-dehydro-3-deoxy-D-gluconate degradation; D-glyceraldehyde 3-phosphate and pyruvate from 2-dehydro-3-deoxy-D-gluconate: step 2/2. In terms of biological role, involved in the degradation of glucose and galactose via the Entner-Doudoroff pathway. Catalyzes the reversible cleavage of 2-keto-3-deoxy-6-phosphogluconate (KDPG) and 2-keto-3-deoxygluconate (KDG) forming pyruvate and glyceraldehyde 3-phosphate or glyceraldehyde, respectively. It is also able to catalyze the reversible cleavage of 2-keto-3-deoxy-6-phosphogalactonate (KDPGal) and 2-keto-3-deoxygalactonate (KDGal). The sequence is that of 2-dehydro-3-deoxy-phosphogluconate/2-dehydro-3-deoxy-6-phosphogalactonate aldolase (kdgA) from Sulfurisphaera tokodaii (strain DSM 16993 / JCM 10545 / NBRC 100140 / 7) (Sulfolobus tokodaii).